The primary structure comprises 223 residues: MRAPPLLLLLAACAPPSGAAVDPTPPGWEPAPDAPWCPYKVLSEGPETGGGRLCFRSPVRGFRCQTPGCETLASAGGSLRAHVLRNRSVLLQWRLAPAEARRVRVFALNCSWRGTYTRFPCDRVLLGASCRDYLLPDVHDSVRYRLCLQQLPLRAEVAVVPPELAECVEFTAEPAAMQEIVVAMTAVGGSICVMLVVICLLVAYITENLMHPTFRRPSLRRQP.

Positions 1-19 are cleaved as a signal peptide; it reads MRAPPLLLLLAACAPPSGA. The Extracellular segment spans residues 20 to 179; it reads AVDPTPPGWE…FTAEPAAMQE (160 aa). Residues 72–168 form the Fibronectin type-III domain; the sequence is LASAGGSLRA…VVPPELAECV (97 aa). Residues Asn86 and Asn109 are each glycosylated (N-linked (GlcNAc...) asparagine). Residues 180-200 form a helical membrane-spanning segment; the sequence is IVVAMTAVGGSICVMLVVICL. Topologically, residues 201–223 are cytoplasmic; sequence LVAYITENLMHPTFRRPSLRRQP.

The protein resides in the membrane. This Mus musculus (Mouse) protein is Fibronectin type III domain-containing protein 10 (Fndc10).